Here is a 663-residue protein sequence, read N- to C-terminus: UvrABC system protein B (663 aa).

Positions 1 to 10 (MIDKRDDKPF) are enriched in basic and acidic residues. Residues 1–23 (MIDKRDDKPFKLKSKYKPSGDQP) form a disordered region. One can recognise a Helicase ATP-binding domain in the interval 31–418 (DNIEGGEKAQ…TNTIIEQIIR (388 aa)). 44–51 (GATGTGKT) is a binding site for ATP. Residues 97–120 (YYDYYQPEAYVPSSDTYIEKDSSV) carry the Beta-hairpin motif. The region spanning 435 to 601 (QMDDLLGEIN…TIKKDIRGLI (167 aa)) is the Helicase C-terminal domain. In terms of domain architecture, UVR spans 627–662 (KEAINALQKQMQEAAELLDFELAAQMRDLILELKLM).

The protein belongs to the UvrB family. In terms of assembly, forms a heterotetramer with UvrA during the search for lesions. Interacts with UvrC in an incision complex.

Its subcellular location is the cytoplasm. In terms of biological role, the UvrABC repair system catalyzes the recognition and processing of DNA lesions. A damage recognition complex composed of 2 UvrA and 2 UvrB subunits scans DNA for abnormalities. Upon binding of the UvrA(2)B(2) complex to a putative damaged site, the DNA wraps around one UvrB monomer. DNA wrap is dependent on ATP binding by UvrB and probably causes local melting of the DNA helix, facilitating insertion of UvrB beta-hairpin between the DNA strands. Then UvrB probes one DNA strand for the presence of a lesion. If a lesion is found the UvrA subunits dissociate and the UvrB-DNA preincision complex is formed. This complex is subsequently bound by UvrC and the second UvrB is released. If no lesion is found, the DNA wraps around the other UvrB subunit that will check the other stand for damage. This is UvrABC system protein B from Streptococcus pyogenes serotype M3 (strain ATCC BAA-595 / MGAS315).